Reading from the N-terminus, the 30-residue chain is Ribonuclease pancreatic (30 aa).

Over residues 1 to 13 (KETAAAKFERQHM) the composition is skewed to basic and acidic residues. A disordered region spans residues 1-21 (KETAAAKFERQHMDPAPAAAX). Positions 7 and 10 each coordinate substrate. Histidine 12 acts as the Proton acceptor in catalysis.

The protein belongs to the pancreatic ribonuclease family. In terms of assembly, monomer. Interacts with and forms tight 1:1 complexes with RNH1. Dimerization of two such complexes may occur. Interaction with RNH1 inhibits this protein. As to expression, pancreas.

The protein localises to the secreted. It carries out the reaction an [RNA] containing cytidine + H2O = an [RNA]-3'-cytidine-3'-phosphate + a 5'-hydroxy-ribonucleotide-3'-[RNA].. The catalysed reaction is an [RNA] containing uridine + H2O = an [RNA]-3'-uridine-3'-phosphate + a 5'-hydroxy-ribonucleotide-3'-[RNA].. Its function is as follows. Endonuclease that catalyzes the cleavage of RNA on the 3' side of pyrimidine nucleotides. Acts on single-stranded and double-stranded RNA. The protein is Ribonuclease pancreatic (RNASE1) of Odocoileus virginianus virginianus (Virginia white-tailed deer).